We begin with the raw amino-acid sequence, 392 residues long: MLLDSRFPTDYYLRILELAIRDSSCKLVYNRRIRMLETLPLDQKLSADQEEESSILREVISELLVHSGESYAISARLLAVIDIYLKQEQPSNSLFARIFRKKERVRKRQIIDKLLLLKSILFFERQRPVKKVASVADSILRKSKGNFSSWEDFTHDVQSQKSGTEEEVPDSLRGRVEEDAASQMIVEVLLSFLDNQDMYLSVSFEILRNFLEEKVLSKRSLSPRSHDAVKKMKDLYLVSPEDFQTFVGGVITESLFQEEDQLVVGCVIFSQEGQELFDSWKGITKKYPHDMLYTQAFLAEVVLHVVQHHIHLNAKVKPTSPEQVGSLYSIRDHSPRAWARMMRVLLMRWLLDYHFDVYAHLKEEILRCPPRPPFWQMIPSESGDGTFHREAR.

It belongs to the chlamydial CPn_0675/CT_696/TC_0068 family.

This is an uncharacterized protein from Chlamydia muridarum (strain MoPn / Nigg).